Consider the following 137-residue polypeptide: Large ribosomal subunit protein uL16 (137 aa).

The protein belongs to the universal ribosomal protein uL16 family. As to quaternary structure, part of the 50S ribosomal subunit.

Binds 23S rRNA and is also seen to make contacts with the A and possibly P site tRNAs. The protein is Large ribosomal subunit protein uL16 of Methylococcus capsulatus (strain ATCC 33009 / NCIMB 11132 / Bath).